A 462-amino-acid chain; its full sequence is Elongation factor 1-alpha (462 aa).

Glycine 2 bears the N,N,N-trimethylglycine mark. Residue lysine 3 is modified to N6,N6-dimethyllysine; alternate. At lysine 3 the chain carries N6-methyllysine; alternate. Residues 5-242 (KAHVNVVVIG…DAIEPPVRPS (238 aa)) enclose the tr-type G domain. Residues 14-21 (GHVDSGKS) are G1. 14–21 (GHVDSGKS) is a binding site for GTP. Lysine 30 is subject to N6-methyllysine. A G2 region spans residues 70–74 (GITID). An N6,N6,N6-trimethyllysine modification is found at lysine 79. A G3 region spans residues 91–94 (DAPG). Residues 91–95 (DAPGH) and 153–156 (NKMD) contribute to the GTP site. Positions 153 to 156 (NKMD) are G4. A G5 region spans residues 192–194 (SGW). At lysine 318 the chain carries N6,N6-dimethyllysine; alternate. Position 318 is an N6-methyllysine; alternate (lysine 318). Lysine 392 is modified (N6-methyllysine).

The protein belongs to the TRAFAC class translation factor GTPase superfamily. Classic translation factor GTPase family. EF-Tu/EF-1A subfamily.

Its subcellular location is the cytoplasm. Functionally, this protein promotes the GTP-dependent binding of aminoacyl-tRNA to the A-site of ribosomes during protein biosynthesis. The protein is Elongation factor 1-alpha (TEF1) of Serendipita indica (Root endophyte fungus).